The sequence spans 598 residues: Nuclear receptor subfamily 4immunitygroup A member 1 (598 aa).

4 disordered regions span residues M1–P44, Y131–F158, L177–P206, and G221–G265. Residues S134–S145 are compositionally biased toward low complexity. The required for nuclear import stretch occupies residues R171–S466. The segment at residues E264 to T339 is a DNA-binding region (nuclear receptor). 2 NR C4-type zinc fingers span residues C267–C287 and C303–C327. Residues A268–K354 are required for binding NBRE-containing DNA. The segment at A299–P361 is required for the interaction with RXRA. S341 bears the Phosphoserine; by PKA mark. The disordered stretch occupies residues S341–P361. Residue S351 is modified to Phosphoserine. Residues S360–T595 enclose the NR LBD domain. The tract at residues P521 to G544 is binds lipopolysaccharide. The segment at P584–T595 is AF-2.

Belongs to the nuclear hormone receptor family. NR4 subfamily. Binds the NGFI-B response element (NBRE) as a monomer. Binds the Nur response element (NurRE), consisting of two inverse NBRE-related octanucleotide repeats separated by 6 base-pairs, as a dimer. Interacts (via N-terminus) with NLRP3 (via LRR repeat domain); the interaction is direct, requires binding of NR4A1/Nur77 to NBRE-containing dsDNA and lipopolysaccharide, and leads to non-canonical NLRP3 inflammasome activation. Interacts with GADD45GIP1. Interacts with STK11. Interacts with IFI27. Heterodimer (via DNA-binding domain) with RXRA (via C-terminus); DNA-binding of the heterodimer is enhanced by 9-cis retinoic acid. Competes for the RXRA interaction with EP300 and thereby attenuates EP300 mediated acetylation of RXRA. Interacts with NCOA1. Interacts with NCOA2. Interacts with NCOA3. Requires Zn(2+) as cofactor. Phosphorylated at Ser-351 by RPS6KA1 and RPS6KA3 in response to mitogenic or stress stimuli. Post-translationally, acetylated by p300/CBP, acetylation increases stability. Deacetylated by HDAC1. In terms of tissue distribution, fetal muscle and adult liver, brain and thyroid.

It localises to the nucleus. The protein resides in the cytoplasm. Its subcellular location is the cytosol. It is found in the mitochondrion. Its transcription factor activity is activated by binding cytosporone B (Csn-B) via its ligand-binding (NR LBD) domain and stimulates recruitment of coactivators NCOA1 and NCOA2, but not NCOA3, to promoters. Csn-B-binding is also accompanied by its translocation to the mitochondrion. Its transcription factor activity is activated by corticotropin-releasing hormone (CRH) and forskolin. Not activated by binding cytosporone C (Csn-C). Orphan nuclear receptor. Binds the NGFI-B response element (NBRE) 5'-AAAGGTCA-3'. Binds 9-cis-retinoic acid outside of its ligand-binding (NR LBD) domain. Participates in energy homeostasis by sequestrating the kinase STK11 in the nucleus, thereby attenuating cytoplasmic AMPK activation. Regulates the inflammatory response in macrophages by regulating metabolic adaptations during inflammation, including repressing the transcription of genes involved in the citric acid cycle (TCA). Inhibits NF-kappa-B signaling by binding to low-affinity NF-kappa-B binding sites, such as at the IL2 promoter. May act concomitantly with NR4A2 in regulating the expression of delayed-early genes during liver regeneration. Plays a role in the vascular response to injury. In terms of biological role, in the cytosol, upon its detection of both bacterial lipopolysaccharide (LPS) and NBRE-containing mitochondrial DNA released by GSDMD pores during pyroptosis, it promotes non-canonical NLRP3 inflammasome activation by stimulating association of NLRP3 and NEK7. This is Nuclear receptor subfamily 4immunitygroup A member 1 (NR4A1) from Homo sapiens (Human).